A 146-amino-acid chain; its full sequence is Snaclec agkicetin-C subunit beta (146 aa).

An N-terminal signal peptide occupies residues 1-23 (MGRFIFVSFGLLVVFLSLSGTGA). 3 disulfide bridges follow: Cys25–Cys36, Cys53–Cys142, and Cys119–Cys134. Positions 32 to 143 (YEGNCYLVVK…CSRTQPFVCK (112 aa)) constitute a C-type lectin domain.

This sequence belongs to the snaclec family. In terms of assembly, heterodimer of subunits alpha and beta; disulfide-linked. As to expression, expressed by the venom gland.

Its subcellular location is the secreted. In terms of biological role, is a potent glycoprotein Ibalpha (GP1BA) antagonist. Concentration-dependently inhibits botrocetin-, ristocetin- and low dose thrombin-induced platelet aggregation. Inhibits platelet adhesion only through inhibiting the vWF interaction with GP1BA, but has minimal effect on other platelet receptors, such as alpha-IIb/beta-3 (ITGA2B/ITGB3) or alpha-2/beta-1 (ITGA2/ITGB1). Causes an instant severe thrombocytopenia in rats and is not lethal to mice. The protein is Snaclec agkicetin-C subunit beta of Deinagkistrodon acutus (Hundred-pace snake).